Consider the following 485-residue polypeptide: Probable outer membrane usher protein LpfC' (485 aa).

This sequence belongs to the fimbrial export usher family.

It is found in the cell outer membrane. In terms of biological role, part of the lpfABCC'DE fimbrial operon. LP fimbriae may participate in the interaction with eukaryotic cells by assisting in microcolony formation. Could be involved in the export and assembly of the fimbrial subunits across the outer membrane. The polypeptide is Probable outer membrane usher protein LpfC' (lpfC') (Escherichia coli O157:H7).